The sequence spans 180 residues: Nucleoside triphosphate/diphosphate phosphatase (180 aa).

Residue Arg-26 is the Proton donor of the active site. 6 residues coordinate Mg(2+): Asn-90, Asp-106, Asp-108, Asp-110, Asp-123, and Glu-126.

This sequence belongs to the Ntdp family. The cofactor is Mg(2+).

It carries out the reaction a ribonucleoside 5'-triphosphate + H2O = a ribonucleoside 5'-diphosphate + phosphate + H(+). It catalyses the reaction a ribonucleoside 5'-diphosphate + H2O = a ribonucleoside 5'-phosphate + phosphate + H(+). Functionally, has nucleoside phosphatase activity towards nucleoside triphosphates and nucleoside diphosphates. The protein is Nucleoside triphosphate/diphosphate phosphatase of Staphylococcus saprophyticus subsp. saprophyticus (strain ATCC 15305 / DSM 20229 / NCIMB 8711 / NCTC 7292 / S-41).